The following is a 317-amino-acid chain: Acetyl-coenzyme A carboxylase carboxyl transferase subunit alpha (317 aa).

The region spanning 40–293 (LEGRVRDAMV…ETVIGDALKE (254 aa)) is the CoA carboxyltransferase C-terminal domain.

The protein belongs to the AccA family. In terms of assembly, acetyl-CoA carboxylase is a heterohexamer composed of biotin carboxyl carrier protein (AccB), biotin carboxylase (AccC) and two subunits each of ACCase subunit alpha (AccA) and ACCase subunit beta (AccD).

It localises to the cytoplasm. The catalysed reaction is N(6)-carboxybiotinyl-L-lysyl-[protein] + acetyl-CoA = N(6)-biotinyl-L-lysyl-[protein] + malonyl-CoA. It functions in the pathway lipid metabolism; malonyl-CoA biosynthesis; malonyl-CoA from acetyl-CoA: step 1/1. Component of the acetyl coenzyme A carboxylase (ACC) complex. First, biotin carboxylase catalyzes the carboxylation of biotin on its carrier protein (BCCP) and then the CO(2) group is transferred by the carboxyltransferase to acetyl-CoA to form malonyl-CoA. In Rhizobium meliloti (strain 1021) (Ensifer meliloti), this protein is Acetyl-coenzyme A carboxylase carboxyl transferase subunit alpha.